The sequence spans 385 residues: Transcription factor TGAL3 (385 aa).

A disordered region spans residues 62–113; it reads LHALVGGGDGGDDAGEQRGADSSAVSKERRGDQKMQRRLAQNREAARKSRMR. Positions 87–96 are enriched in basic and acidic residues; sequence SKERRGDQKM. In terms of domain architecture, bZIP spans 93 to 137; that stretch reads DQKMQRRLAQNREAARKSRMRKKAYIQQLESSRSKLMHLEQELQR. Residues 95–115 are basic motif; that stretch reads KMQRRLAQNREAARKSRMRKK. The leucine-zipper stretch occupies residues 121–135; that stretch reads LESSRSKLMHLEQEL. Residues 162–382 enclose the DOG1 domain; that stretch reads TLAFDLEYAR…RALSSLWLAR (221 aa).

The protein belongs to the bZIP family. As to quaternary structure, interacts with NPR1/NH1, NPR2/NH2 and NPR3/NH3.

The protein resides in the nucleus. Its function is as follows. Transcriptional regulator involved in defense response. The chain is Transcription factor TGAL3 from Oryza sativa subsp. japonica (Rice).